A 215-amino-acid chain; its full sequence is Cytochrome b6 (215 aa).

Residues 32–52 form a helical membrane-spanning segment; the sequence is IFYCLGGITLTCFLVQVATGF. Residue Cys-35 participates in heme c binding. Residues His-86 and His-100 each contribute to the heme b site. Helical transmembrane passes span 90–110, 116–136, and 186–206; these read ASMMVLMMILHVFRVYLTGGF, LTWVTGVILAVLTASFGVTGY, and LHTFVLPLLTAVFMLMHFPMI. The heme b site is built by His-187 and His-202.

The protein belongs to the cytochrome b family. PetB subfamily. The 4 large subunits of the cytochrome b6-f complex are cytochrome b6, subunit IV (17 kDa polypeptide, PetD), cytochrome f and the Rieske protein, while the 4 small subunits are PetG, PetL, PetM and PetN. The complex functions as a dimer. It depends on heme b as a cofactor. The cofactor is heme c.

The protein resides in the plastid. It is found in the chloroplast thylakoid membrane. Component of the cytochrome b6-f complex, which mediates electron transfer between photosystem II (PSII) and photosystem I (PSI), cyclic electron flow around PSI, and state transitions. This is Cytochrome b6 from Liriodendron tulipifera (Tuliptree).